The following is a 521-amino-acid chain: Acidic amino acid decarboxylase GADL1 (521 aa).

Over residues 1–12 (MSLLPDRERAPD) the composition is skewed to basic and acidic residues. The interval 1–20 (MSLLPDRERAPDGDISPQEM) is disordered. At lysine 333 the chain carries N6-(pyridoxal phosphate)lysine.

It belongs to the group II decarboxylase family. Homodimer. Requires pyridoxal 5'-phosphate as cofactor. In terms of tissue distribution, expressed at highest levels in skeletal muscles. Also detected heart, spleen and rumen.

It catalyses the reaction L-aspartate + H(+) = beta-alanine + CO2. The catalysed reaction is 3-sulfino-L-alanine + H(+) = hypotaurine + CO2. It carries out the reaction L-cysteate + H(+) = taurine + CO2. In terms of biological role, catalyzes the decarboxylation of L-aspartate, 3-sulfino-L-alanine (cysteine sulfinic acid), and L-cysteate to beta-alanine, hypotaurine and taurine, respectively. The preferred substrate is L-aspartate. Does not exhibit any decarboxylation activity toward glutamate. The protein is Acidic amino acid decarboxylase GADL1 (GADL1) of Bos taurus (Bovine).